Reading from the N-terminus, the 569-residue chain is Melanophilin (569 aa).

One can recognise a RabBD domain in the interval 4–124 (KLDLSKLTDD…MGSLEWYYGH (121 aa)). The FYVE-type zinc finger occupies 58 to 112 (HLNETHCARCLQPYRLLVAPKRQCLDCHLFTCQDCSHAHPEEEGWLCDPCHLARV). Residues 143-430 (GRLQGGGGPE…MQPGRTTDQE (288 aa)) are disordered. 2 stretches are compositionally biased toward basic and acidic residues: residues 352–362 (ETLKRKLEEMT) and 379–390 (EEEAGLNRKTSI). Positions 404–415 (SGQTSRQETSPR) are enriched in polar residues. Residues 431–465 (LLELEDRVAVTASEVQQVESEVSNIKSKIAALQAA) are a coiled coil. Residues 490 to 569 (GRLGQTPKDP…FAKPVMTQRP (80 aa)) form a disordered region. Positions 526–535 (SQDKAGDSFD) are enriched in basic and acidic residues.

As to quaternary structure, binds RAB27A that has been activated by GTP-binding via its N-terminus. Binds MYO5A via its C-terminal coiled coil domain.

The protein localises to the melanosome. In terms of biological role, rab effector protein involved in melanosome transport. Serves as link between melanosome-bound RAB27A and the motor protein MYO5A. In Felis catus (Cat), this protein is Melanophilin (MLPH).